Here is a 101-residue protein sequence, read N- to C-terminus: Putative pterin-4-alpha-carbinolamine dehydratase (101 aa).

It belongs to the pterin-4-alpha-carbinolamine dehydratase family.

It carries out the reaction (4aS,6R)-4a-hydroxy-L-erythro-5,6,7,8-tetrahydrobiopterin = (6R)-L-erythro-6,7-dihydrobiopterin + H2O. In Streptomyces coelicolor (strain ATCC BAA-471 / A3(2) / M145), this protein is Putative pterin-4-alpha-carbinolamine dehydratase.